We begin with the raw amino-acid sequence, 252 residues long: Ubiquinone biosynthesis O-methyltransferase (252 aa).

S-adenosyl-L-methionine-binding residues include Arg36, Gly60, Asp81, and Leu123.

It belongs to the methyltransferase superfamily. UbiG/COQ3 family.

It catalyses the reaction a 3-demethylubiquinol + S-adenosyl-L-methionine = a ubiquinol + S-adenosyl-L-homocysteine + H(+). It carries out the reaction a 3-(all-trans-polyprenyl)benzene-1,2-diol + S-adenosyl-L-methionine = a 2-methoxy-6-(all-trans-polyprenyl)phenol + S-adenosyl-L-homocysteine + H(+). It participates in cofactor biosynthesis; ubiquinone biosynthesis. Its function is as follows. O-methyltransferase that catalyzes the 2 O-methylation steps in the ubiquinone biosynthetic pathway. The sequence is that of Ubiquinone biosynthesis O-methyltransferase from Rickettsia prowazekii (strain Madrid E).